The primary structure comprises 500 residues: Na(+)/H(+) antiporter NhaB (500 aa).

The next 12 helical transmembrane spans lie at 34–54, 62–82, 90–110, 129–149, 150–170, 205–225, 241–261, 311–331, 350–370, 394–414, 449–469, and 477–497; these read PLFFAVSPAAAGWCLVIEFIF, CYPLMPGGLLLVQALVLGMTT, LVHNFPVILLLMFMVAGIYFM, ALLGLLFCFLSAFLSAFLDAL, TVTAVIISAAVGFYSVYHRVA, LLMHGAVGTALGGVCTLVGEP, FFSKVAPVSMPVLAAGLVTCV, ILIVALALHVAEVGLIGLLVI, FKDAMPFTALLVVFFAVVAVI, MLFIANGLLSAISDNVFVATI, VATPNGQAAFLFLLTSAIAPL, and MVWMALPYTVVMGLLGWYAVS.

Belongs to the NhaB Na(+)/H(+) (TC 2.A.34) antiporter family.

The protein localises to the cell inner membrane. It carries out the reaction 2 Na(+)(in) + 3 H(+)(out) = 2 Na(+)(out) + 3 H(+)(in). In terms of biological role, na(+)/H(+) antiporter that extrudes sodium in exchange for external protons. In Pseudomonas fluorescens (strain ATCC BAA-477 / NRRL B-23932 / Pf-5), this protein is Na(+)/H(+) antiporter NhaB.